Consider the following 583-residue polypeptide: Radixin (583 aa).

An FERM domain is found at 5–295 (INVRVTTMDA…GNHELYMRRR (291 aa)). 60–63 (KLNK) is a binding site for a 1,2-diacyl-sn-glycero-3-phospho-(1D-myo-inositol). Lysine 83 is modified (N6-succinyllysine). Position 278 (lysine 278) interacts with a 1,2-diacyl-sn-glycero-3-phospho-(1D-myo-inositol). Disordered stretches follow at residues 309 to 336 (AREE…AEKE), 374 to 407 (ELDQ…AKQA), and 460 to 526 (KEEL…RVKK). Residues 374–400 (ELDQERKRAKEEAERLEKERQAAEEAK) show a composition bias toward basic and acidic residues. Positions 469–480 (APPPPPPPPVIP) are enriched in pro residues. Composition is skewed to basic and acidic residues over residues 483–492 (ENEHDEHDEN) and 506–525 (MNHR…ERVK). Position 564 is a phosphothreonine; by ROCK2 (threonine 564).

Interacts with CPNE1 (via VWFA domain) and CPNE4 (via VWFA domain). Binds NHERF1. Interacts with NHERF1, NHERF2, LAYN, MME/NEP and ICAM2. Interacts (via FERM domain) with SPN/CD43 cytoplasmic tail. Interacts with CD44. Interacts with CLIC5; may work together in a complex which also includes EZR and MYO6 to stabilize linkages between the plasma membrane and subjacent actin cytoskeleton at the base of stereocilia. Post-translationally, phosphorylated by tyrosine-protein kinases. Phosphorylation by ROCK2 suppresses the head-to-tail association of the N-terminal and C-terminal halves resulting in an opened conformation which is capable of actin and membrane-binding.

It is found in the cell membrane. Its subcellular location is the cytoplasm. The protein localises to the cytoskeleton. The protein resides in the cleavage furrow. It localises to the cell projection. It is found in the microvillus. Its subcellular location is the stereocilium. A head-to-tail association, of the N-terminal and C-terminal halves results in a closed conformation (inactive form) which is incapable of actin or membrane-binding. Its function is as follows. Probably plays a crucial role in the binding of the barbed end of actin filaments to the plasma membrane. The protein is Radixin (RDX) of Bos taurus (Bovine).